Reading from the N-terminus, the 3744-residue chain is SAGA complex/NuA4 acetyltransferase complex subunit TRA1 (3744 aa).

The residue at position 2 (S2) is an N-acetylserine. 4 HEAT repeats span residues 2 to 40 (SLTEQIEQFASRFRDDDATLQSRYSTLSELYDIMELLNS), 46 to 92 (FFLQ…NQTF), 94 to 131 (PYAMEVLEFLLSVLPKENEENGILCMKVLTTLFKSFKS), and 135 to 172 (DKLDSFIRIIIQIYKNTPNLINQTFYEAGKAEQGDLDS). The segment at 2–2598 (SLTEQIEQFA…KPYHTRQISS (2597 aa)) is HEAT. Residue S172 is modified to Phosphoserine. Basic and acidic residues predominate over residues 185–195 (FSKNDEEKDFP). Residues 185–212 (FSKNDEEKDFPSKQSSTEPRFENSTSSN) form a disordered region. Polar residues predominate over residues 196-212 (SKQSSTEPRFENSTSSN). HEAT repeat units lie at residues 247–284 (PEFTPLIMNLLNIQIKQQQEAREQAESRGEHFTSISTE), 319–357 (QDYVNFVPDLIIRLLQDCPSELSSARKELLHATRHILST), and 437–477 (KLLL…RFKT). Residues 522–539 (LEPSDDDHLMPQPKKEDI) are compositionally biased toward basic and acidic residues. Residues 522–546 (LEPSDDDHLMPQPKKEDINDSPDVE) are disordered. S542 carries the post-translational modification Phosphoserine. HEAT repeat units follow at residues 588-628 (RTLM…VFSY), 734-771 (PNFAGILLRFLKGKLKDLGNVDFNTSNVLIRLFKLSFM), 779-821 (INEV…SIGG), 829-867 (RSIKPILQVLLQSLNQMILTARLPHERELYVELCITVPV), 870-910 (SVLA…NLTA), 919-958 (PVIDDVSKALFNLLQPQPFNHAISHNVVRILGKLGGRNRQ), 1074-1112 (NQENLFLRLLESVFYATSIKELKDDAMDLLNNLLDHFCL), 1188-1225 (SFIPELAKQFIHLCYDETYYNKRGGVLGIKVLIDNVKS), 1283-1320 (KVLENTLTDIVCELSNANPKVRNACQKSLHTISNLTGI), 1369-1408 (TFNEELFRLLQESIVLADAEDESLSTNIQKTTEYSTSEQL), 1435-1472 (NIRIRILAVFFKTMLKTSPEIINTTYEALKGSLAENSK), 1476-1512 (ELLQNGLKPLLMNLSDHQKLTVPGLDALSKLLELLIA), 1693-1734 (LKLK…RFTE), 1739-1776 (DQNPLLLDFIDFSFSNGIKASYSLKKFIFHNIIASSNK), 1918-1955 (FPIKVVTQVFVALLRSSHVEARYLVKQSLDVLTPVLHE), 2115-2155 (ELGL…LDSE), 2182-2219 (ENLPTIQNLLEKCIKSDHHDVQEALQKVLQVIMKAIKA), 2230-2267 (SPGKTFIQMLTSVITQDLQETSSVTAGVTLAWVLFMNF), 2269-2307 (DNIVPLLTPLMKTFSKLCKDHLSISQPKDAMALEEARIT), and 2536-2573 (IISSDFIDSLIEIFYQDPKAIHRAWVTLFPQVYKSIPK). The segment at 2599–3744 (RTNVINMLLD…RTDVNFMPWF (1146 aa)) is head. The FAT domain occupies 2622–3177 (LVKYLAISYN…HFQLRTTKED (556 aa)). The region spanning 3374-3732 (FLPTVDFVRG…CIGSAVSPRN (359 aa)) is the PI3K/PI4K catalytic domain. Residues 3380–3386 (FVRGTHS) are G-loop. The segment at 3563–3571 (MINNRTPHK) is catalytic loop. Positions 3600–3625 (LKNHDLSLPPDSPIFHNNEPVPFRLT) are activation loop. Residues 3712–3744 (TPTVTTQFILDCIGSAVSPRNLARTDVNFMPWF) enclose the FATC domain.

The protein belongs to the PI3/PI4-kinase family. TRA1 subfamily. In terms of assembly, component of the 1.8 MDa SAGA (Spt-Ada-Gcn5 acetyltransferase) complex, which is composed of 19 subunits TRA1, SPT7, TAF5, NGG1/ADA3, SGF73, SPT20/ADA5, SPT8, TAF12, TAF6, HFI1/ADA1, UBP8, GCN5, ADA2, SPT3, SGF29, TAF10, TAF9, SGF11 and SUS1. The SAGA complex is composed of 4 modules, namely the HAT (histone acetyltransferase) module (GCN5, ADA2, NGG1/ADA3 and SGF29), the DUB (deubiquitinating) module (UBP8, SGF11, SGF73 and SUS1), the core or TAF (TBP-associated factor) module (TAF5, TAF6, TAF9, TAF10 and TAF12), and the Tra1 or SPT (Suppressor of Ty) module (TRA1, HFI1/ADA1, SPT3, SPT7, SPT8 and SPT20/ADA5). The Tra1/SPT module binds activators, the core module recruits TBP (TATA-binding protein), the HAT module contains the histone H3 acetyltransferase GCN5, and the DUB module comprises the histone H2B deubiquitinase UBP8. Also identified in an altered form of SAGA, named SALSA (SAGA altered, Spt8 absent) or SLIK (SAGA-like) complex, which contains a C-terminal truncated form of SPT7 and is missing SPT8. However, it has been shown that the SAGA and SAGA-like SALSA/SLIK transcriptional coactivators are structurally and biochemically equivalent. Component of the NuA4 acetyltransferase complex, which consists of the catalytic subunit ESA1 and the 12 non-catalytic subunits ACT1, ARP4, EAF1/VID21, SWC4/EAF2, EAF3, EAF5, EAF6, EAF7, EPL1, TRA1, YAF9 and YNG2. TRA1 is the scaffold subunit for binding to a variety of transcription activators or transcription factors to recruit NuA4 for targeted gene activation. Identified in the Ada.spt complex with NGG1/ADA3 and SPT7.

It localises to the nucleus. In terms of biological role, essential scaffold subunit of the transcription coactivator SAGA complex. SAGA acts as a general cofactor required for essentially all RNA polymerase II transcription. At the promoters, SAGA is required for transcription pre-initiation complex (PIC) recruitment. It influences RNA polymerase II transcriptional activity through different activities such as TBP interaction (via core/TAF module) and promoter selectivity, interaction with transcription activators (via Tra1/SPT module), and chromatin modification through histone acetylation (via HAT module) and deubiquitination (via DUB module). SAGA preferentially acetylates histones H3 (to form H3K9ac, H3K14ac, H3K18ac and H3K23ac) and H2B and deubiquitinates histone H2B. SAGA interacts with DNA via upstream activating sequences (UASs). Also identified in a modified version of SAGA named SALSA or SLIK. The cleavage of SPT7 and the absence of the SPT8 subunit in SLIK neither drive any major conformational differences in its structure compared with SAGA, nor significantly affect HAT, DUB, or DNA-binding activities. Component of the NuA4 histone H4/H2A acetyltransferase involved in transcription and DNA repair. This is SAGA complex/NuA4 acetyltransferase complex subunit TRA1 from Saccharomyces cerevisiae (strain ATCC 204508 / S288c) (Baker's yeast).